We begin with the raw amino-acid sequence, 591 residues long: Serine/threonine-protein kinase Nek2 (591 aa).

Residues 4 to 258 (YEVLEQIGKG…AAQLLKHPQL (255 aa)) enclose the Protein kinase domain. Residues 10 to 18 (IGKGAFGSA) and K33 contribute to the ATP site. The active-site Proton acceptor is the D129. Disordered stretches follow at residues 309–331 (LGNE…SSTR), 382–408 (ARNQ…TTPN), and 500–534 (RTDG…DTSS). 2 stretches are compositionally biased toward polar residues: residues 391–408 (TSYN…TTPN) and 504–534 (DNGS…DTSS).

Belongs to the protein kinase superfamily. NEK Ser/Thr protein kinase family. NIMA subfamily. As to expression, expressed in anthers, pistils and leaves.

It carries out the reaction L-seryl-[protein] + ATP = O-phospho-L-seryl-[protein] + ADP + H(+). The enzyme catalyses L-threonyl-[protein] + ATP = O-phospho-L-threonyl-[protein] + ADP + H(+). In terms of biological role, may be involved in plant development processes. The polypeptide is Serine/threonine-protein kinase Nek2 (Oryza sativa subsp. japonica (Rice)).